A 1184-amino-acid chain; its full sequence is Probable phospholipid-transporting ATPase 12 (1184 aa).

Residues 1–75 (MATVSGRRRK…TTKYTLATFL (75 aa)) lie on the Cytoplasmic side of the membrane. A helical membrane pass occupies residues 76 to 97 (PKSLFEQFRRVANFYFLVVGIL). Over 98 to 101 (SFTP) the chain is Extracellular. Residues 102–124 (LAPYTAVSAIVPLTFVILATMFK) traverse the membrane as a helical segment. Residues 125 to 306 (EGVEDWRRKQ…SMIERKMDKI (182 aa)) lie on the Cytoplasmic side of the membrane. Residues 307 to 328 (IYLMFLMVFSLAFFGSVLFGIW) form a helical membrane-spanning segment. Over 329–364 (TRDDFQNGVMERWYLKPDDSSIFFDPKRAPMAAIYH) the chain is Extracellular. The helical transmembrane segment at 365–382 (FLTALMLNSYFIPISLYV) threads the bilayer. Over 383–921 (SIEIVKVLQS…HGHWCYRRIS (539 aa)) the chain is Cytoplasmic. Residue aspartate 430 is the 4-aspartylphosphate intermediate of the active site. Residues aspartate 866 and aspartate 870 each contribute to the Mg(2+) site. The helical transmembrane segment at 922 to 941 (KMICYFFYKNITFGFTLFLY) threads the bilayer. The Extracellular segment spans residues 942–955 (EAYTSFSATPAYND). The helical transmembrane segment at 956–975 (WYLSLYSVFFTSLPVICLGI) threads the bilayer. Residues 976 to 1005 (FDQDVSAPFCLKFPVLYQEGVQNLLFSWRR) lie on the Cytoplasmic side of the membrane. The chain crosses the membrane as a helical span at residues 1006–1028 (ILSWMFHGFCSAIIIFFLCKTSL). Residues 1029-1041 (ESQAFNHEGKTAG) lie on the Extracellular side of the membrane. Residues 1042 to 1064 (RDILGGTMYTCVVWVVSLQMVLT) traverse the membrane as a helical segment. The Cytoplasmic segment spans residues 1065-1070 (ISYFTL). A helical transmembrane segment spans residues 1071–1091 (IQHVVVWGSVVIWYLFLMVYG). Topologically, residues 1092–1108 (SLPIRMSTDAYMVFLEA) are extracellular. Residues 1109–1133 (LAPAPSYWITTLFVVLSTMMPYFIF) form a helical membrane-spanning segment. Topologically, residues 1134-1184 (SAIQMRFFPMSHGTVQLLRYEDQCSNSGNFEMGRQGSVRPTLVMRSHQPES) are cytoplasmic.

The protein belongs to the cation transport ATPase (P-type) (TC 3.A.3) family. Type IV subfamily.

It is found in the membrane. The enzyme catalyses ATP + H2O + phospholipidSide 1 = ADP + phosphate + phospholipidSide 2.. Its function is as follows. Involved in transport of phospholipids. This Arabidopsis thaliana (Mouse-ear cress) protein is Probable phospholipid-transporting ATPase 12.